Consider the following 511-residue polypeptide: Bifunctional purine biosynthesis protein PurH (511 aa).

Residues 1–145 form the MGS-like domain; that stretch reads MKKRALVSVS…KNHKFVSVIV (145 aa).

Belongs to the PurH family.

It catalyses the reaction (6R)-10-formyltetrahydrofolate + 5-amino-1-(5-phospho-beta-D-ribosyl)imidazole-4-carboxamide = 5-formamido-1-(5-phospho-D-ribosyl)imidazole-4-carboxamide + (6S)-5,6,7,8-tetrahydrofolate. The catalysed reaction is IMP + H2O = 5-formamido-1-(5-phospho-D-ribosyl)imidazole-4-carboxamide. It functions in the pathway purine metabolism; IMP biosynthesis via de novo pathway; 5-formamido-1-(5-phospho-D-ribosyl)imidazole-4-carboxamide from 5-amino-1-(5-phospho-D-ribosyl)imidazole-4-carboxamide (10-formyl THF route): step 1/1. The protein operates within purine metabolism; IMP biosynthesis via de novo pathway; IMP from 5-formamido-1-(5-phospho-D-ribosyl)imidazole-4-carboxamide: step 1/1. The sequence is that of Bifunctional purine biosynthesis protein PurH from Bacillus cereus (strain ZK / E33L).